The following is a 229-amino-acid chain: UPF0758 protein CA_C1241 (229 aa).

The 123-residue stretch at 107–229 (KITSPKEAAN…YISLKEEGLL (123 aa)) folds into the MPN domain. Zn(2+) contacts are provided by H178, H180, and D191. The JAMM motif signature appears at 178 to 191 (HNHPSGDPKPSNED).

It belongs to the UPF0758 family.

The polypeptide is UPF0758 protein CA_C1241 (Clostridium acetobutylicum (strain ATCC 824 / DSM 792 / JCM 1419 / IAM 19013 / LMG 5710 / NBRC 13948 / NRRL B-527 / VKM B-1787 / 2291 / W)).